We begin with the raw amino-acid sequence, 187 residues long: Large ribosomal subunit protein bL12cx (187 aa).

The N-terminal 54 residues, 1-54, are a transit peptide targeting the chloroplast; the sequence is MASTTLSIATTIRSSSPLTSASTHHFLSKPTAIEFPFRLSSSSSHRAINLRPIS.

The protein belongs to the bacterial ribosomal protein bL12 family.

It localises to the plastid. It is found in the chloroplast. The chain is Large ribosomal subunit protein bL12cx (RPL12C) from Arabidopsis thaliana (Mouse-ear cress).